We begin with the raw amino-acid sequence, 433 residues long: 26S proteasome regulatory subunit 7 (433 aa).

A disordered region spans residues 1–22 (MPDYLGADQRKTKEDEKDDKPI). Residues 8–22 (DQRKTKEDEKDDKPI) show a composition bias toward basic and acidic residues. The residue at position 116 (K116) is an N6-acetyllysine. 216-223 (GPPGTGKT) is a binding site for ATP. K422 bears the N6-acetyllysine mark.

The protein belongs to the AAA ATPase family. As to quaternary structure, component of the 19S proteasome regulatory particle complex. The 26S proteasome consists of a 20S core particle (CP) and two 19S regulatory subunits (RP). The regulatory particle is made of a lid composed of 9 subunits, a base containing 6 ATPases including PSMC2 and few additional components. Interacts with NDC80/HEC; this interaction is detected only during M phase. Interacts and SQSTM1. Interacts with PAAF1. Directly interacts with TRIM5. In terms of processing, monoubiquitinated by RNF181. Post-translationally, phosphorylated. Dephosphorylated by UBLCP1 which impairs PSMC2 ATPase activity and disrupts 26S proteasome assembly.

It localises to the cytoplasm. Its subcellular location is the nucleus. In terms of biological role, component of the 26S proteasome, a multiprotein complex involved in the ATP-dependent degradation of ubiquitinated proteins. This complex plays a key role in the maintenance of protein homeostasis by removing misfolded or damaged proteins, which could impair cellular functions, and by removing proteins whose functions are no longer required. Therefore, the proteasome participates in numerous cellular processes, including cell cycle progression, apoptosis, or DNA damage repair. PSMC2 belongs to the heterohexameric ring of AAA (ATPases associated with diverse cellular activities) proteins that unfolds ubiquitinated target proteins that are concurrently translocated into a proteolytic chamber and degraded into peptides. The polypeptide is 26S proteasome regulatory subunit 7 (PSMC2) (Pongo abelii (Sumatran orangutan)).